A 270-amino-acid polypeptide reads, in one-letter code: Cross-pathway control protein 1 (270 aa).

Disordered regions lie at residues Gln-114–Pro-135 and Gln-153–Glu-213. The span at Ser-184–Val-195 shows a compositional bias: low complexity. A bZIP domain is found at Ser-216–Glu-270. The interval Lys-222–Arg-240 is basic motif. The leucine-zipper stretch occupies residues Leu-241–Ile-248.

It belongs to the bZIP family. GCN4 subfamily. Binds DNA as a dimer.

It localises to the nucleus. Functionally, in N.crassa grown under amino acid starvation conditions, this protein is required for increasing the transcription of the genes coding for many amino acid biosynthetic pathways enzymes. This transcription factor binds and recognize the DNA sequence: 5'-TGACTC-3'. This chain is Cross-pathway control protein 1 (cpc-1), found in Neurospora crassa (strain ATCC 24698 / 74-OR23-1A / CBS 708.71 / DSM 1257 / FGSC 987).